Consider the following 489-residue polypeptide: MTATQSPPEPAPDRVRLAGCPLAGTPDVGLTAQDATTALGVPTRRRASSGGIPVATSMWRDAQTVRTYGPAVAKALALRVAGKARSRLTGRHCRKFMQLTDFDPFDPAIAADPYPHYRELLAGERVQYNPKRDVYILSRYADVREAARNHDTLSSARGVTFSRGWLPFLPTSDPPAHTRMRKQLAPGMARGALETWRPMVDQLARELVGGLLTQTPADVVSTVAAPMPMRAITSVLGVDGPDEAAFCRLSNQAVRITDVALSASGLISLVQGFAGFRRLRALFTHRRDNGLLRECTVLGKLATHAEQGRLSDDELFFFAVLLLVAGYESTAHMISTLFLTLADYPDQLTLLAQQPDLIPSAIEEHLRFISPIQNICRTTRVDYSVGQAVIPAGSLVLLAWGAANRDPRQYEDPDVFRADRNPVGHLAFGSGIHLCPGTQLARMEGQAILREIVANIDRIEVVEPPTWTTNANLRGLTRLRVAVTPRVAP.

Cys-435 is a heme binding site.

Belongs to the cytochrome P450 family. Heme serves as cofactor.

The protein localises to the cytoplasm. It carries out the reaction beta-dihydromenaquinone-9 + 2 reduced [2Fe-2S]-[ferredoxin] + O2 + 2 H(+) = omega-hydroxy-beta-dihydromenaquinone-9 + 2 oxidized [2Fe-2S]-[ferredoxin] + H2O. In terms of biological role, involved in the biosynthesis of sulfomenaquinone (SMK, initially named S881 on the basis of its mass), which is localized in the outer envelope of M.bovis and negatively regulates its virulence. Catalyzes the hydroxylation of beta-dihydromenaquinone-9, leading to the formation of omega-hydroxy-beta-dihydromenaquinone-9. This chain is Beta-dihydromenaquinone-9 omega-hydroxylase (cyp128), found in Mycobacterium bovis (strain ATCC BAA-935 / AF2122/97).